We begin with the raw amino-acid sequence, 71 residues long: Large ribosomal subunit protein bL31 (71 aa).

Zn(2+) is bound by residues cysteine 16, cysteine 18, cysteine 36, and cysteine 39.

This sequence belongs to the bacterial ribosomal protein bL31 family. Type A subfamily. As to quaternary structure, part of the 50S ribosomal subunit. Zn(2+) serves as cofactor.

Its function is as follows. Binds the 23S rRNA. This chain is Large ribosomal subunit protein bL31, found in Thermus thermophilus (strain ATCC BAA-163 / DSM 7039 / HB27).